Consider the following 665-residue polypeptide: Glycine--tRNA ligase beta subunit (665 aa).

This sequence belongs to the class-II aminoacyl-tRNA synthetase family. Tetramer of two alpha and two beta subunits.

The protein localises to the cytoplasm. The enzyme catalyses tRNA(Gly) + glycine + ATP = glycyl-tRNA(Gly) + AMP + diphosphate. The sequence is that of Glycine--tRNA ligase beta subunit (glyS) from Rickettsia prowazekii (strain Madrid E).